The following is a 482-amino-acid chain: UDP-N-acetylmuramate--L-alanine ligase (482 aa).

115 to 121 (GTHGKTT) is a binding site for ATP.

The protein belongs to the MurCDEF family.

Its subcellular location is the cytoplasm. The catalysed reaction is UDP-N-acetyl-alpha-D-muramate + L-alanine + ATP = UDP-N-acetyl-alpha-D-muramoyl-L-alanine + ADP + phosphate + H(+). The protein operates within cell wall biogenesis; peptidoglycan biosynthesis. Functionally, cell wall formation. This is UDP-N-acetylmuramate--L-alanine ligase from Rhodospirillum centenum (strain ATCC 51521 / SW).